The primary structure comprises 449 residues: Heterogeneous nuclear ribonucleoprotein H2 (449 aa).

Methionine 1 carries the N-acetylmethionine modification. Methionine 2 carries the post-translational modification N-acetylmethionine; in Heterogeneous nuclear ribonucleoprotein H2, N-terminally processed. An RRM 1 domain is found at 11–90 (FVVKVRGLPW…RYVEVFKSNS (80 aa)). Phosphoserine is present on serine 23. Lysine 35 participates in a covalent cross-link: Glycyl lysine isopeptide (Lys-Gly) (interchain with G-Cter in SUMO2). Residues serine 54 and serine 63 each carry the phosphoserine modification. A Glycyl lysine isopeptide (Lys-Gly) (interchain with G-Cter in SUMO2) cross-link involves residue lysine 87. Serine 90 is modified (phosphoserine). Residue lysine 98 forms a Glycyl lysine isopeptide (Lys-Gly) (interchain with G-Cter in SUMO2) linkage. The RRM 2 domain occupies 111–188 (GFVRLRGLPF…RYIEIFKSSR (78 aa)). Residue arginine 233 is modified to Dimethylated arginine; alternate. The residue at position 233 (arginine 233) is an Omega-N-methylarginine; alternate. Residues 234–249 (GAYGGGYGGYDDYGGY) form a 1-1 repeat. The 2 X 16 AA Gly-rich approximate repeats stretch occupies residues 234 to 433 (GAYGGGYGGY…YGGQSSMSGY (200 aa)). At tyrosine 246 the chain carries Phosphotyrosine. Residues 289-364 (HCVHMRGLPY…RYVELFLNST (76 aa)) enclose the RRM 3 domain. Phosphoserine is present on serine 310. Tandem repeats lie at residues 354–372 (HRYV…GGAY), 374–392 (HSYV…GGAY), and 418–433 (GGYG…MSGY). A 2 X 19 AA perfect repeats region spans residues 354-392 (HRYVELFLNSTAGTSGGAYDHSYVELFLNSTAGASGGAY).

Component of a ribonucleoprotein complex containing mRNAs and RNA-binding proteins including DDX5, HNRNPH2 and SRSF1 as well as splicing regulator ARVCF. Interacts with TXNL4/DIM1.

The protein localises to the nucleus. The protein resides in the nucleoplasm. Functionally, this protein is a component of the heterogeneous nuclear ribonucleoprotein (hnRNP) complexes which provide the substrate for the processing events that pre-mRNAs undergo before becoming functional, translatable mRNAs in the cytoplasm. Binds poly(RG). The chain is Heterogeneous nuclear ribonucleoprotein H2 (HNRNPH2) from Bos taurus (Bovine).